The chain runs to 527 residues: Catalase (527 aa).

The segment covering 1 to 22 has biased composition (basic and acidic residues); that stretch reads MADSRDPASDQMKHWKEERAAQ. The disordered stretch occupies residues 1–32; it reads MADSRDPASDQMKHWKEERAAQKPDVLTTAGG. Position 2 is an N-acetylalanine (A2). Position 9 is a phosphoserine (S9). Residue K13 is modified to N6-succinyllysine. Active-site residues include H75 and N148. Residues H194, S201, R203, and N213 each coordinate NADP(+). Position 221 is an N6-succinyllysine (K221). K233 bears the N6-acetyllysine mark. NADP(+)-binding residues include K237, W303, H305, and K306. N6-acetyllysine; alternate is present on K306. Position 306 is an N6-succinyllysine; alternate (K306). Residue Y358 coordinates heme. At S434 the chain carries Phosphoserine. Position 480 is an N6-acetyllysine; alternate (K480). K480 bears the N6-succinyllysine; alternate mark. Residue K499 is modified to N6-acetyllysine. The residue at position 511 (T511) is a Phosphothreonine. S517 bears the Phosphoserine mark. K522 bears the N6-succinyllysine mark. The short motif at 524–527 is the Microbody targeting signal; atypical element; that stretch reads KANL.

This sequence belongs to the catalase family. As to quaternary structure, homotetramer. Interacts (via microbody targeting signal) with PEX5, monomeric form interacts with PEX5, leading to its translocation into peroxisomes. Heme serves as cofactor. It depends on NADP(+) as a cofactor.

It is found in the peroxisome matrix. The enzyme catalyses 2 H2O2 = O2 + 2 H2O. Its function is as follows. Catalyzes the degradation of hydrogen peroxide (H(2)O(2)) generated by peroxisomal oxidases to water and oxygen, thereby protecting cells from the toxic effects of hydrogen peroxide. Promotes growth of cells including T-cells, B-cells, myeloid leukemia cells, melanoma cells, mastocytoma cells and normal and transformed fibroblast cells. In Cavia porcellus (Guinea pig), this protein is Catalase (CAT).